A 533-amino-acid chain; its full sequence is tRNA(Ile)-lysidine synthase (533 aa).

Residue 27–32 coordinates ATP; it reads SGGSDS.

It belongs to the tRNA(Ile)-lysidine synthase family.

It is found in the cytoplasm. The catalysed reaction is cytidine(34) in tRNA(Ile2) + L-lysine + ATP = lysidine(34) in tRNA(Ile2) + AMP + diphosphate + H(+). In terms of biological role, ligates lysine onto the cytidine present at position 34 of the AUA codon-specific tRNA(Ile) that contains the anticodon CAU, in an ATP-dependent manner. Cytidine is converted to lysidine, thus changing the amino acid specificity of the tRNA from methionine to isoleucine. This chain is tRNA(Ile)-lysidine synthase, found in Rickettsia peacockii (strain Rustic).